Reading from the N-terminus, the 128-residue chain is NHP2-like protein 1 (128 aa).

The segment at 36-48 is interaction with U4 snRNA and U4atac snRNA; sequence RKGANEATKTLNR. The important for U4 snRNA-binding stretch occupies residues 96–128; that stretch reads SRPVIACSVTIKEGSQLKPQIQSVQQAIERLLV.

This sequence belongs to the eukaryotic ribosomal protein eL8 family. In terms of assembly, identified in the spliceosome B complex. Component of the U4/U6-U5 tri-snRNP complex. Part of the small subunit (SSU) processome, composed of more than 70 proteins and the RNA chaperone small nucleolar RNA (snoRNA) U3.

It localises to the nucleus. It is found in the nucleolus. Its function is as follows. Part of the small subunit (SSU) processome, first precursor of the small eukaryotic ribosomal subunit. During the assembly of the SSU processome in the nucleolus, many ribosome biogenesis factors, an RNA chaperone and ribosomal proteins associate with the nascent pre-rRNA and work in concert to generate RNA folding, modifications, rearrangements and cleavage as well as targeted degradation of pre-ribosomal RNA by the RNA exosome. Involved in pre-mRNA splicing as component of the spliceosome. Binds to the 5'-stem-loop of U4 snRNA and thereby contributes to spliceosome assembly. The protein undergoes a conformational change upon RNA-binding. Core component of box C/D small nucleolar ribonucleoprotein (snoRNP) complexes that function in methylation of multiple sites on ribosomal RNAs (rRNAs) and messenger RNAs (mRNAs). The protein is NHP2-like protein 1 of Xenopus laevis (African clawed frog).